We begin with the raw amino-acid sequence, 494 residues long: V-type proton ATPase subunit B (494 aa).

Belongs to the ATPase alpha/beta chains family. As to quaternary structure, V-ATPase is a heteromultimeric enzyme composed of a peripheral catalytic V1 complex (main components: subunits A, B, C, D, E, and F) attached to an integral membrane V0 proton pore complex (main component: the proteolipid protein).

In terms of biological role, non-catalytic subunit of the peripheral V1 complex of vacuolar ATPase. V-ATPase is responsible for acidifying a variety of intracellular compartments in eukaryotic cells. The protein is V-type proton ATPase subunit B (VAPB) of Plasmodium falciparum.